The sequence spans 566 residues: Transcription factor P14E8.02 (566 aa).

The segment at 1–32 is disordered; the sequence is MNISSQNVLLPSPIPSSSPMASHKKSWLSKHP. Position 73 is a phosphoserine (S73). The region spanning 86–137 is the FHA domain; that stretch reads NKIGRSSQQCDHVLSTVDKAISRVHAIVTCTQDRMIIECVGWNGMIVSDKMR. Disordered stretches follow at residues 191 to 217, 269 to 291, 312 to 334, and 364 to 437; these read EENR…SQDY, DCSK…LLNG, ESDD…IEES, and FTNH…TKEN. The segment covering 314-330 has biased composition (acidic residues); sequence DDLDKNEEISEGEEYTP. 2 stretches are compositionally biased toward polar residues: residues 373-383 and 414-428; these read NSNITTSNDSP and DENT…PSSH. Residues S379 and S382 each carry the phosphoserine modification.

Belongs to the PLM2/TOS4 family.

Its subcellular location is the nucleus. Its function is as follows. Probable transcriptional regulatory protein Required for G1/S progression. In Schizosaccharomyces pombe (strain 972 / ATCC 24843) (Fission yeast), this protein is Transcription factor P14E8.02.